Consider the following 509-residue polypeptide: Steroid 17-alpha-hydroxylase/17,20 lyase (509 aa).

Asparagine 202 contacts substrate. A heme-binding site is contributed by cysteine 442.

Belongs to the cytochrome P450 family. Requires heme as cofactor.

The protein localises to the endoplasmic reticulum membrane. It localises to the microsome membrane. The enzyme catalyses a C21-steroid + reduced [NADPH--hemoprotein reductase] + O2 = a 17alpha-hydroxy-C21-steroid + oxidized [NADPH--hemoprotein reductase] + H2O + H(+). The catalysed reaction is progesterone + reduced [NADPH--hemoprotein reductase] + O2 = 17alpha-hydroxyprogesterone + oxidized [NADPH--hemoprotein reductase] + H2O + H(+). It catalyses the reaction pregnenolone + reduced [NADPH--hemoprotein reductase] + O2 = 17alpha-hydroxypregnenolone + oxidized [NADPH--hemoprotein reductase] + H2O + H(+). It carries out the reaction 17alpha-hydroxyprogesterone + reduced [NADPH--hemoprotein reductase] + O2 = androst-4-ene-3,17-dione + acetate + oxidized [NADPH--hemoprotein reductase] + H2O + 2 H(+). The enzyme catalyses 17alpha-hydroxyprogesterone + reduced [NADPH--hemoprotein reductase] + O2 = 16alpha,17alpha-dihydroxyprogesterone + oxidized [NADPH--hemoprotein reductase] + H2O + H(+). The catalysed reaction is 16alpha,17alpha-dihydroxyprogesterone + reduced [NADPH--hemoprotein reductase] + O2 = 6beta,16alpha,17alpha-trihydroxyprogesterone + oxidized [NADPH--hemoprotein reductase] + H2O + H(+). It catalyses the reaction 17alpha-hydroxypregnenolone + reduced [NADPH--hemoprotein reductase] + O2 = 3beta-hydroxyandrost-5-en-17-one + acetate + oxidized [NADPH--hemoprotein reductase] + H2O + 2 H(+). It carries out the reaction 16alpha,17alpha-dihydroxypregnenolone + reduced [NADPH--hemoprotein reductase] + O2 = 3beta,16alpha-dihydroxy-androst-5-en-17-one + acetate + oxidized [NADPH--hemoprotein reductase] + H2O + 2 H(+). The enzyme catalyses 3beta-hydroxyandrost-5-en-17-one + reduced [NADPH--hemoprotein reductase] + O2 = 3beta,16alpha-dihydroxy-androst-5-en-17-one + oxidized [NADPH--hemoprotein reductase] + H2O + H(+). The catalysed reaction is androst-4-ene-3,17-dione + reduced [NADPH--hemoprotein reductase] + O2 = 16alpha-hydroxyandrost-4-ene-3,17-dione + oxidized [NADPH--hemoprotein reductase] + H2O + H(+). It participates in steroid hormone biosynthesis. The protein operates within steroid biosynthesis; glucocorticoid biosynthesis. Its activity is regulated as follows. Regulated predominantly by intracellular cAMP levels. The 17,20-lyase activity is stimulated by cytochrome b5, which acts as an allosteric effector increasing the Vmax of the lyase activity. A cytochrome P450 monooxygenase involved in corticoid and androgen biosynthesis. Catalyzes 17-alpha hydroxylation of C21 steroids, which is common for both pathways. A second oxidative step, required only for androgen synthesis, involves an acyl-carbon cleavage. The 17-alpha hydroxy intermediates, as part of adrenal glucocorticoids biosynthesis pathway, are precursors of cortisol. Hydroxylates steroid hormones, pregnenolone and progesterone to form 17-alpha hydroxy metabolites, followed by the cleavage of the C17-C20 bond to form C19 steroids, dehydroepiandrosterone (DHEA) and androstenedione. Has 16-alpha hydroxylase activity. Catalyzes 16-alpha hydroxylation of 17-alpha hydroxy pregnenolone, followed by the cleavage of the C17-C20 bond to form 16-alpha-hydroxy DHEA. Also 16-alpha hydroxylates androgens, relevant for estriol synthesis. Mechanistically, uses molecular oxygen inserting one oxygen atom into a substrate, and reducing the second into a water molecule, with two electrons provided by NADPH via cytochrome P450 reductase (CPR; NADPH-ferrihemoprotein reductase). In Bison bison (American bison), this protein is Steroid 17-alpha-hydroxylase/17,20 lyase (CYP17A1).